The following is a 388-amino-acid chain: MLNGTTLEAAMLFHGISGGHIQGIMEEMERRSKTEARLAKGTQLNGRDAGMPPLSPEKPALCAGCGGKISDRYYLLAVDKQWHLRCLKCCECKLALESELTCFAKDGSIYCKEDYYRRFSVQRCARCHLGISASEMVMRARDSVYHLSCFTCSTCNKTLTTGDHFGMKDSLVYCRAHFETLLQGEYPPQLSYTELAAKSGGLALPYFNGTGTVQKGRPRKRKSPALGVDIVNYNSGCNENEADHLDRDQQPYPPSQKTKRMRTSFKHHQLRTMKSYFAINHNPDAKDLKQLAQKTGLTKRVLQVWFQNARAKFRRNLLRQENGGVDKADGTSLPAPPSADSGALTPPGTATTLTDLTNPTVTVVTTVTSNMDSHESGSPSQTTLTNLF.

2 consecutive LIM zinc-binding domains span residues 69 to 130 (ISDR…CHLG) and 131 to 193 (ISAS…LSYT). Disordered regions lie at residues 239–263 (ENEADHLDRDQQPYPPSQKTKRMRT), 321–356 (ENGGVDKADGTSLPAPPSADSGALTPPGTATTLTDL), and 369–388 (SNMDSHESGSPSQTTLTNLF). The homeobox DNA-binding region spans 267-326 (HHQLRTMKSYFAINHNPDAKDLKQLAQKTGLTKRVLQVWFQNARAKFRRNLLRQENGGVD). The segment covering 344-356 (LTPPGTATTLTDL) has biased composition (low complexity). Positions 376–388 (SGSPSQTTLTNLF) are enriched in polar residues.

Interacts with LDB1 and LDB2.

The protein resides in the nucleus. In terms of biological role, involved in gonadal development. This Rattus norvegicus (Rat) protein is LIM/homeobox protein Lhx9 (Lhx9).